Consider the following 513-residue polypeptide: MARPRSLVSPLLSGVFCQCDTVGGAPHTHDTPASPSLAAALAADPCGGLVCGGPEHETRLQILFQELDVNKDGGICINDLAVGLKRLGVHRTELELRKIVKAGDKDQDGQLDFEEFVHYLRDHEKKLRLVFKSLDKKNDGRIDAQEIMQSLRDLGVNISEQQAEKILKSMDKNGTMTIDWNEWRDYHLLHPAENIPEIILYWKHSTIFDVGENLLVPDEFTVEEKQTGMWWRHLVAGGGAGAVSRTCTAPLDRLKVLMQVHASRSNNMSMLGGFTQMIREGGIRSLWRGNGINVIKIAPESAIKFMAYEQMKRIIGSDQETLGIHERLVAGSLAGVIAQSSIYPMEVLKTRMALRKTGQYQGMLDCGKKILLKEGVSAFYKGYVPNMLGIIPYAGIDLAVYETLKNAWLQRYATSSADPGVFVLLACGTISSTCGQLASYPLALVRTRMQAEASVEGAPQMTMSKLFKHIVKTEGAFGLYRGLAPNFMKVIPAVSISYVVYENLKLTLGVQSR.

Topologically, residues 1–233 (MARPRSLVSP…EKQTGMWWRH (233 aa)) are mitochondrial intermembrane. EF-hand domains lie at 55 to 90 (EHET…LGVH), 91 to 124 (RTEL…RDHE), 122 to 157 (DHEK…LGVN), and 158 to 193 (ISEQ…HPAE). Positions 68, 70, 72, 79, 104, 106, 108, 110, and 115 each coordinate Ca(2+). Solcar repeat units follow at residues 228–314 (GMWW…MKRI), 322–407 (LGIH…LKNA), and 419–507 (PGVF…LKLT). A helical transmembrane segment spans residues 234–251 (LVAGGGAGAVSRTCTAPL). Residues 252–288 (DRLKVLMQVHASRSNNMSMLGGFTQMIREGGIRSLWR) are Mitochondrial matrix-facing. Residues 289-308 (GNGINVIKIAPESAIKFMAY) traverse the membrane as a helical segment. The Mitochondrial intermembrane portion of the chain corresponds to 309-331 (EQMKRIIGSDQETLGIHERLVAG). A helical membrane pass occupies residues 332–345 (SLAGVIAQSSIYPM). The Mitochondrial matrix portion of the chain corresponds to 346–381 (EVLKTRMALRKTGQYQGMLDCGKKILLKEGVSAFYK). Residues 382-401 (GYVPNMLGIIPYAGIDLAVY) form a helical membrane-spanning segment. Topologically, residues 402-424 (ETLKNAWLQRYATSSADPGVFVL) are mitochondrial intermembrane. The chain crosses the membrane as a helical span at residues 425-442 (LACGTISSTCGQLASYPL). Topologically, residues 443–481 (ALVRTRMQAEASVEGAPQMTMSKLFKHIVKTEGAFGLYR) are mitochondrial matrix. A helical membrane pass occupies residues 482–501 (GLAPNFMKVIPAVSISYVVY). Residues 502-513 (ENLKLTLGVQSR) lie on the Mitochondrial intermembrane side of the membrane.

It belongs to the mitochondrial carrier (TC 2.A.29) family.

It localises to the mitochondrion inner membrane. Functionally, calcium-dependent mitochondrial solute carrier. The protein is Calcium-binding mitochondrial carrier protein SCaMC-2 (slc25a25) of Xenopus tropicalis (Western clawed frog).